A 796-amino-acid polypeptide reads, in one-letter code: Armadillo repeat-containing protein wrm-1 (796 aa).

The interval 17–59 (NFNPMTPSTSRVSTPVRPSSTMSARQYSGSPFKAQPQNMEPSN) is disordered. The stretch at 462-504 (ESIHCIVQLIGCSDVTIVELATGTLRNIGLHNKMNKAFMVQDG) is one ARM repeat.

In terms of assembly, interacts (independently of ARM repeat) with nhr-25. Component of the beta-catenin-lit-1 complex (also called the lit-1/wrm-1 complex or the wrm-1/lit-1 kinase complex) at least composed of lit-1 and wrm-1. Interacts (via N-terminus) with lit-1; the interaction is direct and activates lit-1 kinase activity which leads to the phosphorylation of pop-1. This promotes pop-1 interaction with par-5 and translocation of pop-1 from the nucleus to the cytoplasm.

It localises to the cytoplasm. The protein localises to the cell cortex. The protein resides in the nucleus. Its function is as follows. Antagonistic role in the Wnt signaling pathway that operates in embryogenesis. When located at the cortex it has been shown to inhibit Wnt signaling during asymmetric cell division but when relocated to the nucleus it shows positive regulation. Has a role in blastomere signaling during endoderm specification. Component of the beta-catenin-lit-1 complex which promotes phosphorylation, down-regulation and subcellular relocation of pop-1. Within the complex, activates lit-1-dependent kinase activity. Can substitute for bar-1 indicating functional redundancy. Appears to have a role in centrosome positioning and can activation transcription in yeast. Involved in the development of distal tip cells (DTC) by regulating the asymmetric distribution of cye-1 and cki-1 between the daughters of Z1.a and Z4.p cells. In Caenorhabditis elegans, this protein is Armadillo repeat-containing protein wrm-1.